Here is a 194-residue protein sequence, read N- to C-terminus: GTP cyclohydrolase 1 (194 aa).

Positions 83, 86, and 155 each coordinate Zn(2+).

This sequence belongs to the GTP cyclohydrolase I family. As to quaternary structure, toroid-shaped homodecamer, composed of two pentamers of five dimers.

It carries out the reaction GTP + H2O = 7,8-dihydroneopterin 3'-triphosphate + formate + H(+). It participates in cofactor biosynthesis; 7,8-dihydroneopterin triphosphate biosynthesis; 7,8-dihydroneopterin triphosphate from GTP: step 1/1. This chain is GTP cyclohydrolase 1, found in Streptococcus pyogenes serotype M3 (strain ATCC BAA-595 / MGAS315).